Here is a 555-residue protein sequence, read N- to C-terminus: Potassium-transporting ATPase potassium-binding subunit (555 aa).

10 helical membrane passes run 2 to 22 (IWVAVIITMLLFILVAKPTGV), 60 to 80 (QYALSLVLLNGFMIVVVYFIF), 130 to 150 (IGITFLMFAAPATTLALVMAF), 173 to 193 (VFLPIAFIAALVFVALGVPQT), 246 to 266 (MSNILQMMLMMLLPTALPFTY), 278 to 298 (ILFVSLFMVFLLGFITITTSE), 374 to 394 (AGFVNIIMYAIIAVFISGLMV), 412 to 432 (LIAVTILFHPLLILGFSALAL), 483 to 503 (LVMFLGRYFSLITMLAVAASL), and 525 to 545 (GIFIGTIVIVGALTFFPMLVL).

The protein belongs to the KdpA family. The system is composed of three essential subunits: KdpA, KdpB and KdpC.

The protein resides in the cell membrane. Functionally, part of the high-affinity ATP-driven potassium transport (or Kdp) system, which catalyzes the hydrolysis of ATP coupled with the electrogenic transport of potassium into the cytoplasm. This subunit binds the extracellular potassium ions and delivers the ions to the membrane domain of KdpB through an intramembrane tunnel. This is Potassium-transporting ATPase potassium-binding subunit from Bacillus cereus (strain B4264).